A 229-amino-acid chain; its full sequence is Prolactin (229 aa).

Residues 1 to 30 (MDKKGWSLKGSLLPLLLLVSDLLLCQSVAS) form the signal peptide. An intrachain disulfide couples cysteine 34 to cysteine 41. 3 positions are modified to phosphoserine: serine 56, serine 64, and serine 120. Disulfide bonds link cysteine 88/cysteine 204 and cysteine 221/cysteine 229.

The protein belongs to the somatotropin/prolactin family. As to quaternary structure, interacts with PRLR.

Its subcellular location is the secreted. In terms of biological role, prolactin acts primarily on the mammary gland by promoting lactation. The sequence is that of Prolactin (PRL) from Ailuropoda melanoleuca (Giant panda).